We begin with the raw amino-acid sequence, 98 residues long: uncharacterized protein (98 aa).

The region spanning 1 to 85 (MLETVPVRCV…GTLKQALENM (85 aa)) is the STAS domain.

Post-translationally, phosphorylated on threonine residue(s). Phosphorylated by PrkC and dephosphorylated by PrpC.

It localises to the cytoplasm. This is an uncharacterized protein from Bacillus subtilis (strain 168).